The following is a 1447-amino-acid chain: DNA topoisomerase 2 (1447 aa).

Residues asparagine 72, asparagine 101, 129-131 (SSN), and 142-149 (GRNGYGAK) contribute to the ATP site. Residues 323 to 325 (KKK) are interaction with DNA. 357-359 (QTK) contacts ATP. In terms of domain architecture, Toprim spans 435 to 552 (CTLILTEGDS…ELLRLPFLEE (118 aa)). Mg(2+) is bound by residues glutamate 441, aspartate 521, and aspartate 523. The 475-residue stretch at 695–1169 (IPSLVDGLKP…TPEMLWLDDL (475 aa)) folds into the Topo IIA-type catalytic domain. Catalysis depends on tyrosine 785, which acts as the O-(5'-phospho-DNA)-tyrosine intermediate. Residues 972 to 981 (KLTTTLSTNQ) are interaction with DNA. Disordered regions lie at residues 1079–1110 (EDAEQADEEDEEEEEAAPSVSSKAKKEKEVDP), 1183–1231 (ERAE…DGEP), and 1246–1447 (AAAK…DFNC). Positions 1081–1094 (AEQADEEDEEEEEA) are enriched in acidic residues. The span at 1255–1281 (KEPKKPKEPKEPKVKKEPKGKQIKAEP) shows a compositional bias: basic and acidic residues. Positions 1283–1293 (ASGDEVDEFDA) are enriched in acidic residues. Serine 1284 is subject to Phosphoserine. Composition is skewed to basic and acidic residues over residues 1310–1325 (VKKEPGEKKPRQKKEN) and 1332–1359 (SKIDFSKAKAKKSDDDVEEVTPRAERPG). At serine 1344 the chain carries Phosphoserine. Position 1352 is a phosphothreonine (threonine 1352). Phosphoserine is present on residues serine 1374, serine 1385, serine 1392, and serine 1396. The span at 1374–1394 (SDEEEDGGNVGSDDDGNASDD) shows a compositional bias: acidic residues. The segment covering 1395–1408 (DSPKRPAKRGREDE) has biased composition (basic and acidic residues). Basic residues predominate over residues 1413–1423 (AKKKAPPKKRR). Residues 1427–1447 (ESDDDDIEIDEDDDDDSDFNC) show a composition bias toward acidic residues.

Belongs to the type II topoisomerase family. In terms of assembly, homodimer. Interacts with mod(mdg4). Interacts with barr. Interacts with ph-p. Interacts with mle; the interaction mediates association with the MSL dosage compensation complex. Requires Mg(2+) as cofactor. The cofactor is Mn(2+). It depends on Ca(2+) as a cofactor. Post-translationally, phosphorylated. Phosphorylation by casein kinase II enhances ATPase activity.

The protein resides in the nucleus. It is found in the chromosome. The protein localises to the cytoplasm. It carries out the reaction ATP-dependent breakage, passage and rejoining of double-stranded DNA.. Control of topological states of DNA by transient breakage and subsequent rejoining of DNA strands. Topoisomerase II makes double-strand breaks. Essential during mitosis and meiosis for proper segregation of daughter chromosomes. During meiosis, it disrupts heterochromatic connections between achiasmate and chiasmate homologs after spindle assembly so that chromosomes can separate at prometaphase I. During mitosis, it functions in the separation of sister chromatids by establishing amphitelic kinetochore attachments in mitotic spindles. May have a role in chromatin condensation and chromosome structure. May be involved in X-chromosome dosage compensation, perhaps by modifying the topological state of compensated genes. Regulates activity of the gypsy chromatin insulator complex by binding to mod(mdg4) and preventing its degradation. This is DNA topoisomerase 2 from Drosophila melanogaster (Fruit fly).